A 76-amino-acid chain; its full sequence is Esculentin-2-ALb (76 aa).

Positions 1 to 22 are cleaved as a signal peptide; the sequence is MFTMKKSLLLLFFLGTISLSLC. Residues 23–39 constitute a propeptide that is removed on maturation; the sequence is EEERSADEDDGEKGVKR. Cysteines 70 and 76 form a disulfide.

Expressed by the skin glands.

The protein resides in the secreted. Its function is as follows. Antimicrobial peptide with activity against Gram-positive and Gram-negative bacteria and against fungi. Has been tested against S.aureus (MIC=1.25 ug/mL), B.pumilus (MIC=2.5 ug/mL), B.cereus (MIC=7.5 ug/mL), E.coli (MIC=12.5 ug/mL), B.dysenteriae (MIC=7.5 ug/mL), A.cacoaceticus (MIC=12.5 ug/mL), P.aeruginosa (MIC=50.0 ug/mL) and C.albicans (MIC=2.5 ug/mL). Also shows a weak hemolytic activity. The sequence is that of Esculentin-2-ALb from Amolops loloensis (Lolokou Sucker Frog).